Consider the following 186-residue polypeptide: Ribosome-recycling factor (186 aa).

Belongs to the RRF family.

Its subcellular location is the cytoplasm. Responsible for the release of ribosomes from messenger RNA at the termination of protein biosynthesis. May increase the efficiency of translation by recycling ribosomes from one round of translation to another. In Bordetella parapertussis (strain 12822 / ATCC BAA-587 / NCTC 13253), this protein is Ribosome-recycling factor.